We begin with the raw amino-acid sequence, 156 residues long: Oxidized purine nucleoside triphosphate hydrolase (156 aa).

The Nudix hydrolase domain occupies 3–132; sequence TSRLYTLVLV…WFPLLLQKKK (130 aa). 2-oxo-dATP is bound at residue Thr-8. 8-oxo-dGTP-binding positions include Thr-8, Lys-23, Asn-33, 35-38, and Glu-52; that span reads FGGK. 2-oxo-dATP is bound by residues Asn-33 and 35–38; that span reads FGGK. 5 residues coordinate Mg(2+): Gly-36, Glu-52, Glu-55, Glu-56, and Glu-100. The Nudix box motif lies at 37–58; the sequence is GKVQEGETIEDGAKRELLEESG. Residues Glu-56, Glu-100, and 117–120 each bind 8-oxo-dGTP; that span reads WPDD. Residue 117-120 participates in 2-oxo-dATP binding; the sequence is WPDD.

This sequence belongs to the Nudix hydrolase family. Monomer. Mg(2+) serves as cofactor. In terms of tissue distribution, high expression levels detected in thymus, liver, spleen, kidney, testis and large intestine, with lower levels detected in brain, heart, lung and stomach (at protein level). Expressed in kidney, liver and small intestine.

The protein localises to the cytoplasm. It localises to the nucleus. It is found in the nucleus membrane. The protein resides in the cytoplasmic vesicle. Its subcellular location is the secretory vesicle. The protein localises to the acrosome. The catalysed reaction is 2-oxo-dATP + H2O = 2-oxo-dAMP + diphosphate + H(+). The enzyme catalyses 2-oxo-ATP + H2O = 2-oxo-AMP + diphosphate + H(+). It carries out the reaction 8-oxo-dGTP + H2O = 8-oxo-dGMP + diphosphate + H(+). It catalyses the reaction 8-oxo-dATP + H2O = 8-oxo-dAMP + diphosphate + H(+). The catalysed reaction is O(6)-methyl-dGTP + H2O = O(6)-methyl-dGMP + diphosphate + H(+). The enzyme catalyses N(6)-methyl-dATP + H2O = N(6)-methyl-dAMP + diphosphate + H(+). It carries out the reaction N(6)-methyl-ATP + H2O = N(6)-methyl-AMP + diphosphate + H(+). Oxidized purine nucleoside triphosphate hydrolase which is a prominent sanitizer of the oxidized nucleotide pool. Catalyzes the hydrolysis of 2-oxo-dATP (2-hydroxy-dATP) into 2-oxo-dAMP. Also has a significant hydrolase activity toward 2-oxo-ATP, 8-oxo-dGTP and 8-oxo-dATP. Through the hydrolysis of oxidized purine nucleoside triphosphates, prevents their incorporation into DNA and the subsequent transversions A:T to C:G and G:C to T:A. Also catalyzes the hydrolysis of methylated purine nucleoside triphosphate preventing their integration into DNA. Through this antimutagenic activity protects cells from oxidative stress. The polypeptide is Oxidized purine nucleoside triphosphate hydrolase (Nudt1) (Mus musculus (Mouse)).